The chain runs to 573 residues: Sulfate adenylyltransferase (573 aa).

The interval 1-169 is N-terminal; it reads MSNPPHGGVL…LEAVNKLQHY (169 aa). The segment at 170-394 is catalytic; that stretch reads DFVDLRYSPA…LRESHPPRSQ (225 aa). Q197 serves as a coordination point for sulfate. Residues 197-200 and 291-294 each bind ATP; these read QTRN and GRDH. Residues T198, R199, and N200 contribute to the active site. Residue R199 participates in sulfate binding. Sulfate is bound at residue A295. M333 serves as a coordination point for ATP. Residues 395 to 573 are allosteric regulation domain; adenylyl-sulfate kinase-like; the sequence is QGFTVLFTGY…LESQGLLDRF (179 aa). 3'-phosphoadenylyl sulfate is bound by residues 434 to 437, R451, 477 to 478, and R515; these read ENIR and IA.

This sequence in the N-terminal section; belongs to the sulfate adenylyltransferase family. In the C-terminal section; belongs to the APS kinase family. In terms of assembly, homohexamer. Dimer of trimers.

Its subcellular location is the cytoplasm. The catalysed reaction is sulfate + ATP + H(+) = adenosine 5'-phosphosulfate + diphosphate. Its pathway is sulfur metabolism; hydrogen sulfide biosynthesis; sulfite from sulfate: step 1/3. With respect to regulation, allosterically inhibited by 3'-phosphoadenosine 5'-phosphosulfate (PAPS). In terms of biological role, catalyzes the first intracellular reaction of sulfate assimilation, forming adenosine-5'-phosphosulfate (APS) from inorganic sulfate and ATP. Plays an important role in sulfate activation as a component of the biosynthesis pathway of sulfur-containing amino acids. The protein is Sulfate adenylyltransferase (cys-11) of Neurospora crassa (strain ATCC 24698 / 74-OR23-1A / CBS 708.71 / DSM 1257 / FGSC 987).